Here is a 388-residue protein sequence, read N- to C-terminus: Endoglucanase 3 (388 aa).

Positions 1 to 16 (MKHSVLAGLFATGALA) are cleaved as a signal peptide. In terms of domain architecture, CBM1 spans 17-52 (QGGAWQQCGGVGFSGSTSCVSGYTCVYLNDWYSQCQ). Cystine bridges form between C24/C41 and C35/C51. The linker stretch occupies residues 53 to 91 (PQPTTLRTTTTPGATSTTRSAPAATSTTPAKGKFKWFGI). Positions 56-81 (TTLRTTTTPGATSTTRSAPAATSTTP) are disordered. N-linked (GlcNAc...) asparagine glycans are attached at residues N92 and N155. The catalytic stretch occupies residues 92 to 388 (NQSCAEFGKG…YNSLLKKYVP (297 aa)). E215 functions as the Proton donor in the catalytic mechanism. N-linked (GlcNAc...) asparagine glycosylation occurs at N259. Catalysis depends on E322, which acts as the Nucleophile.

Belongs to the glycosyl hydrolase 5 (cellulase A) family.

It catalyses the reaction Endohydrolysis of (1-&gt;4)-beta-D-glucosidic linkages in cellulose, lichenin and cereal beta-D-glucans.. This is Endoglucanase 3 (CMC3) from Humicola insolens (Soft-rot fungus).